Reading from the N-terminus, the 433-residue chain is Glutamate-1-semialdehyde 2,1-aminomutase (433 aa).

N6-(pyridoxal phosphate)lysine is present on Lys265.

It belongs to the class-III pyridoxal-phosphate-dependent aminotransferase family. HemL subfamily. As to quaternary structure, homodimer. Pyridoxal 5'-phosphate serves as cofactor.

The protein resides in the cytoplasm. The catalysed reaction is (S)-4-amino-5-oxopentanoate = 5-aminolevulinate. It functions in the pathway porphyrin-containing compound metabolism; protoporphyrin-IX biosynthesis; 5-aminolevulinate from L-glutamyl-tRNA(Glu): step 2/2. The protein is Glutamate-1-semialdehyde 2,1-aminomutase of Shewanella denitrificans (strain OS217 / ATCC BAA-1090 / DSM 15013).